We begin with the raw amino-acid sequence, 393 residues long: MSIKTVKDFSSFAGKRALVRCDFNVPLKEGSISDDTRIRAALSTIEYLKERGARIVLVSHLGRPDGKKNPKYSLKPVANRLSELLGQDVKMLSDCIGSEVVNSTLQMKDGDVVLLENVRFYAEEEKNDKNFAKKLSENGDVFVNDAFGAAHRAHASTVGVADYLPSVGGFLMEKEDKFLGGILKNPERPFVSIIGGSKVSSKIAVLESLLSKSNVVVIGGGMAYTFLHSEGYSIGKSLLEDEYIGIASSFLKKAKELGVKVILPLDHIVADDFNKNSIPEYIDSFNIPENKIGMDIGANTLKEIENVVKTAKTIIWNGPLGVFEFDSFSKGTAKVAEMVASCSGLTVVGGGDSVAAVNKFNLSDKITHVSTGGGASLEYLEGRILPGIKVLEN.

Substrate-binding positions include 22–24 (DFN), Arg37, 60–63 (HLGR), Arg119, and Arg152. ATP is bound by residues Lys202, Gly293, Glu324, and 350 to 353 (GGDS).

The protein belongs to the phosphoglycerate kinase family. Monomer.

The protein localises to the cytoplasm. The enzyme catalyses (2R)-3-phosphoglycerate + ATP = (2R)-3-phospho-glyceroyl phosphate + ADP. It participates in carbohydrate degradation; glycolysis; pyruvate from D-glyceraldehyde 3-phosphate: step 2/5. This chain is Phosphoglycerate kinase (pgk), found in Borreliella burgdorferi (strain ATCC 35210 / DSM 4680 / CIP 102532 / B31) (Borrelia burgdorferi).